Reading from the N-terminus, the 360-residue chain is MNAPLGGIWLWLPLLLTWLTPEVSSSWWYMRATGGSSRVMCDNVPGLVSRQRQLCHRHPDVMRAISLGVSEWTAECQHQFRQHRWNCNTLDRDHSLFGRVLLRSSRESAFVYAISSAGVVFAITRACSQGELKSCSCDPKKKGTAKDSKGTFDWGGCSDNIDYGIKFARAFVDAKERKGKDARALMNLHNNRAGRKAVKRFLKQECKCHGVSGSCTLRTCWLAMADFRKTGAYLWRKYNGAIQVVMNQDGTGFTVANKRFKKPTKNDLVYFENSPDYCIRDREAGSLGTAGRVCNLTSRGMDSCEVMCCGRGYDTSRVTRMTKCECKFHWCCAVRCQDCLEALDVHTCKAPKNADWATPT.

A signal peptide spans 1–26 (MNAPLGGIWLWLPLLLTWLTPEVSSS). Intrachain disulfides connect Cys-76-Cys-87, Cys-127-Cys-135, Cys-137-Cys-157, Cys-206-Cys-220, Cys-208-Cys-215, Cys-278-Cys-309, Cys-294-Cys-304, Cys-308-Cys-348, Cys-324-Cys-339, Cys-326-Cys-336, and Cys-331-Cys-332. Ser-212 carries the O-palmitoleoyl serine; by PORCN lipid modification. Asn-295 is a glycosylation site (N-linked (GlcNAc...) asparagine).

This sequence belongs to the Wnt family. Post-translationally, palmitoleoylation is required for efficient binding to frizzled receptors. Depalmitoleoylation leads to Wnt signaling pathway inhibition.

It localises to the secreted. The protein resides in the extracellular space. Its subcellular location is the extracellular matrix. Functionally, ligand for members of the frizzled family of seven transmembrane receptors. Probable developmental protein. May be a signaling molecule which affects the development of discrete regions of tissues. Is likely to signal over only few cell diameters. This chain is Protein Wnt-2 (WNT2), found in Eulemur macaco macaco (Black lemur).